A 357-amino-acid chain; its full sequence is Guanine nucleotide-binding protein alpha-16 subunit (357 aa).

Gly-2 carries the N-myristoyl glycine lipid modification. Cys-3 is lipidated: S-palmitoyl cysteine. Residues 32–357 (RTIKLLLLGA…RDNLRTCGLY (326 aa)) enclose the G-alpha domain. Residues 35 to 48 (KLLLLGAGESGKST) are G1 motif. GTP is bound by residues 40-47 (GAGESGKS), 175-181 (LRTRIKT), 200-204 (DVGGQ), 269-272 (NKKD), and Ala-329. The Mg(2+) site is built by Ser-47 and Thr-181. Residues 173–181 (DILRTRIKT) form a G2 motif region. Residues 196–205 (FLVFDVGGQR) form a G3 motif region. Residues 265–272 (ILFLNKKD) are G4 motif. The segment at 327-332 (TCATDT) is G5 motif.

It belongs to the G-alpha family. G proteins are composed of 3 units; alpha, beta and gamma. The alpha chain contains the guanine nucleotide binding site.

In terms of biological role, guanine nucleotide-binding proteins (G proteins) are involved as modulators or transducers in various transmembrane signaling systems. In the 1-cell embryo, probably together with goa-1, controls nuclear rotation and spindle elongation during mitosis. During the first embryonic cell divisons, plays a role in gpr-1/2 cortical localization and in the proper orientation of EMS blastomere mitotic spindle. The protein is Guanine nucleotide-binding protein alpha-16 subunit (gpa-16) of Caenorhabditis elegans.